The following is a 657-amino-acid chain: Hemocyanin B chain (657 aa).

A disulfide bond links C93 and C98. N-linked (GlcNAc...) asparagine glycosylation is present at N167. Positions 194, 198, 224, 344, 348, and 384 each coordinate Cu cation. Cystine bridges form between C483–C502 and C562–C609.

It belongs to the tyrosinase family. Hemocyanin subfamily. As to quaternary structure, hexamer of a number of different chains, of which A, B, and C have been identified. As to expression, hemolymph.

The protein resides in the secreted. It localises to the extracellular space. Functionally, hemocyanins are copper-containing oxygen carriers occurring freely dissolved in the hemolymph of many mollusks and arthropods. The protein is Hemocyanin B chain of Panulirus interruptus (California spiny lobster).